Here is a 176-residue protein sequence, read N- to C-terminus: Inner membrane-spanning protein YciB (176 aa).

Helical transmembrane passes span Thr24–His44, Pro49–His69, Trp76–Phe96, Tyr121–Phe141, and Phe149–Leu169.

It belongs to the YciB family.

It is found in the cell inner membrane. Its function is as follows. Plays a role in cell envelope biogenesis, maintenance of cell envelope integrity and membrane homeostasis. The sequence is that of Inner membrane-spanning protein YciB from Paraburkholderia phymatum (strain DSM 17167 / CIP 108236 / LMG 21445 / STM815) (Burkholderia phymatum).